A 426-amino-acid chain; its full sequence is Serine--tRNA ligase (426 aa).

An L-serine-binding site is contributed by 229-231 (TAE). ATP-binding positions include 260 to 262 (RTE) and valine 276. An L-serine-binding site is contributed by glutamate 283. 350 to 353 (EVTS) serves as a coordination point for ATP. L-serine is bound at residue threonine 386.

The protein belongs to the class-II aminoacyl-tRNA synthetase family. Type-1 seryl-tRNA synthetase subfamily. Homodimer. The tRNA molecule binds across the dimer.

It is found in the cytoplasm. It carries out the reaction tRNA(Ser) + L-serine + ATP = L-seryl-tRNA(Ser) + AMP + diphosphate + H(+). The enzyme catalyses tRNA(Sec) + L-serine + ATP = L-seryl-tRNA(Sec) + AMP + diphosphate + H(+). It functions in the pathway aminoacyl-tRNA biosynthesis; selenocysteinyl-tRNA(Sec) biosynthesis; L-seryl-tRNA(Sec) from L-serine and tRNA(Sec): step 1/1. Functionally, catalyzes the attachment of serine to tRNA(Ser). Is also able to aminoacylate tRNA(Sec) with serine, to form the misacylated tRNA L-seryl-tRNA(Sec), which will be further converted into selenocysteinyl-tRNA(Sec). The protein is Serine--tRNA ligase of Rhodopirellula baltica (strain DSM 10527 / NCIMB 13988 / SH1).